Here is a 166-residue protein sequence, read N- to C-terminus: Zinc finger CCHC domain-containing protein 13 (166 aa).

The CCHC-type 1; degenerate zinc-finger motif lies at 4-21; it reads KDFFACGHSGHWARGCPR. The segment at 45 to 62 adopts a CCHC-type 2; degenerate zinc-finger fold; that stretch reads YTCYCCGESGRNAKNCVL. 4 consecutive CCHC-type zinc fingers follow at residues 65-82, 89-106, 110-127, and 128-145; these read NICY…DCKD, QHCY…DCDR, QKCY…DCAQ, and VKCY…NCSK.

This Homo sapiens (Human) protein is Zinc finger CCHC domain-containing protein 13 (ZCCHC13).